A 410-amino-acid chain; its full sequence is F-box/WD repeat-containing protein 4 (410 aa).

Residues 23–69 (GPALWRLPEELLLLICSYLDTRALGRLAQVCRWLRRFTSCDLLWRPI) form the F-box domain. WD repeat units follow at residues 159-196 (GHDE…TVKY), 198-235 (AHEQ…LGQC), 289-327 (PPGA…RKCV), and 333-372 (PHDS…CLHA).

In terms of assembly, part of a SCF (SKP1-cullin-F-box) protein ligase complex. Interacts with POUF51.

Probably recognizes and binds to some phosphorylated proteins and promotes their ubiquitination and degradation. Likely to be involved in key signaling pathways crucial for normal limb development. May participate in Wnt signaling. This Mus musculus (Mouse) protein is F-box/WD repeat-containing protein 4 (Fbxw4).